The following is a 55-amino-acid chain: Large ribosomal subunit protein eL37 (55 aa).

4 residues coordinate Zn(2+): Cys20, Cys23, Cys35, and Cys38. The segment at 20–38 adopts a C4-type zinc-finger fold; it reads CRRCGKNSYHKRHHRCSSC.

Belongs to the eukaryotic ribosomal protein eL37 family. Requires Zn(2+) as cofactor.

Binds to the 23S rRNA. This chain is Large ribosomal subunit protein eL37, found in Cenarchaeum symbiosum (strain A).